The primary structure comprises 872 residues: Leucine--tRNA ligase (872 aa).

The short motif at 42–52 (PYPSGSLHMGH) is the 'HIGH' region element. The short motif at 634–638 (TMSKS) is the 'KMSKS' region element. Lys637 contributes to the ATP binding site.

Belongs to the class-I aminoacyl-tRNA synthetase family.

The protein localises to the cytoplasm. The enzyme catalyses tRNA(Leu) + L-leucine + ATP = L-leucyl-tRNA(Leu) + AMP + diphosphate. The sequence is that of Leucine--tRNA ligase from Trichormus variabilis (strain ATCC 29413 / PCC 7937) (Anabaena variabilis).